The sequence spans 500 residues: UBX domain-containing protein 5 (500 aa).

Residues 50 to 61 (SNNTPTPSNSTP) are compositionally biased toward low complexity. The tract at residues 50–70 (SNNTPTPSNSTPMAPTSVDSD) is disordered. Position 139 is a phosphoserine (Ser-139). 2 disordered regions span residues 142–169 (NQRL…EEND) and 371–399 (ESLN…QEPD). Residues 148-161 (TNTNTYINDNSSDS) are compositionally biased toward low complexity. The 79-residue stretch at 415–493 (KPGITTRIQI…GLKNSSLLLE (79 aa)) folds into the UBX domain.

In terms of assembly, interacts with CDC48.

The protein resides in the nucleus. The protein localises to the cytoplasm. In terms of biological role, involved in CDC48-dependent protein degradation through the ubiquitin/proteasome pathway. The sequence is that of UBX domain-containing protein 5 (UBX5) from Saccharomyces cerevisiae (strain ATCC 204508 / S288c) (Baker's yeast).